The following is a 230-amino-acid chain: Large ribosomal subunit protein uL1 (230 aa).

The protein belongs to the universal ribosomal protein uL1 family. Part of the 50S ribosomal subunit.

Functionally, binds directly to 23S rRNA. The L1 stalk is quite mobile in the ribosome, and is involved in E site tRNA release. Its function is as follows. Protein L1 is also a translational repressor protein, it controls the translation of the L11 operon by binding to its mRNA. This chain is Large ribosomal subunit protein uL1, found in Lactobacillus acidophilus (strain ATCC 700396 / NCK56 / N2 / NCFM).